We begin with the raw amino-acid sequence, 314 residues long: Mitochondrial RNA-splicing protein MRS3 (314 aa).

Solcar repeat units lie at residues 31-118, 128-210, and 217-310; these read APLY…CKKN, HHPF…STKF, and YNPL…AKHF. A run of 6 helical transmembrane segments spans residues 33-52, 93-112, 130-149, 185-204, 219-238, and 285-298; these read LYHQ…SVMF, GVQS…FGTY, PFKT…ALMN, SYPT…FVIY, PLIH…AITT, and GWKP…PATA.

It belongs to the mitochondrial carrier (TC 2.A.29) family.

The protein localises to the mitochondrion inner membrane. Its function is as follows. MRS3 suppresses a mitochondrial splice defect in the first intron of the COB gene. It may act as a carrier, exerting its suppressor activity via modulation of solute concentrations in the mitochondrion (possibly of cations). This chain is Mitochondrial RNA-splicing protein MRS3 (MRS3), found in Saccharomyces cerevisiae (strain ATCC 204508 / S288c) (Baker's yeast).